We begin with the raw amino-acid sequence, 393 residues long: Putative odorant receptor 69a, isoform B (393 aa).

Residues 1–39 (MQLEDFMRYPDLVCQAAQLPRYTWNGRRSLEVKRNLAKR) lie on the Cytoplasmic side of the membrane. A helical transmembrane segment spans residues 40–60 (IIFWLGAVNLVYHNIGCVMYG). Over 61–69 (YFGDGRTKD) the chain is Extracellular. A helical transmembrane segment spans residues 70–90 (PIAYLAELASVASMLGFTIVG). The Cytoplasmic portion of the chain corresponds to 91-138 (TLNLWKMLSLKTHFENLLNEFEELFQLIKHRAYRIHHYQEKYTRHIRN). Residues 139-159 (TFIFHTSAVVYYNSLPILLMI) traverse the membrane as a helical segment. The Extracellular segment spans residues 160–208 (REHFSNSQQLGYRIQSNTWYPWQVQGSIPGFFAAVACQIFSCQTNMCVN). Residues 209–229 (MFIQFLINFFGIQLEIHFDGL) traverse the membrane as a helical segment. At 230-269 (ARQLETIDARNPHAKDQLKYLIVYHTKLLNLADRVNRSFN) the chain is on the cytoplasmic side. A helical membrane pass occupies residues 270–290 (FTFLISLSVSMISNCFLAFSM). The Extracellular portion of the chain corresponds to 291–305 (TMFDFGTSLKHLLGL). The chain crosses the membrane as a helical span at residues 306 to 326 (LLFITYNFSMCRSGTHLILTS). The Cytoplasmic portion of the chain corresponds to 327–365 (GKVLPAAFYNNWYEGDLVYRRMLLILMMRATKPYMWKTY). Residues 366–386 (KLAPVSITTYMATLKFSYQMF) form a helical membrane-spanning segment. Topologically, residues 387–393 (TCVRSLK) are extracellular.

The protein belongs to the insect chemoreceptor superfamily. Heteromeric odorant receptor channel (TC 1.A.69) family. Or49a subfamily. In terms of assembly, interacts with Orco. Complexes exist early in the endomembrane system in olfactory sensory neurons (OSNs), coupling these complexes to the conserved ciliary trafficking pathway. As to expression, expressed in olfactory sensory neurons in the antenna.

It localises to the cell membrane. Its function is as follows. Odorant receptor which mediates acceptance or avoidance behavior, depending on its substrates. The odorant receptor repertoire encodes a large collection of odor stimuli that vary widely in identity, intensity, and duration. May form a complex with Orco to form odorant-sensing units, providing sensitive and prolonged odorant signaling and calcium permeability. The chain is Putative odorant receptor 69a, isoform B (Or69a) from Drosophila melanogaster (Fruit fly).